Consider the following 730-residue polypeptide: Catalase-peroxidase (730 aa).

The tryptophyl-tyrosyl-methioninium (Trp-Tyr) (with M-244) cross-link spans 95–218 (WHSAGTYRVG…LAAVQMGLIY (124 aa)). Histidine 96 (proton acceptor) is an active-site residue. Positions 218–244 (YVNPEGPNGNPDPLGSAHDVRETFARM) form a cross-link, tryptophyl-tyrosyl-methioninium (Tyr-Met) (with W-95). Residue histidine 259 participates in heme b binding.

It belongs to the peroxidase family. Peroxidase/catalase subfamily. As to quaternary structure, homodimer or homotetramer. Heme b serves as cofactor. In terms of processing, formation of the three residue Trp-Tyr-Met cross-link is important for the catalase, but not the peroxidase activity of the enzyme.

It catalyses the reaction H2O2 + AH2 = A + 2 H2O. It carries out the reaction 2 H2O2 = O2 + 2 H2O. Its function is as follows. Bifunctional enzyme with both catalase and broad-spectrum peroxidase activity. This chain is Catalase-peroxidase, found in Clostridium botulinum (strain Eklund 17B / Type B).